A 700-amino-acid polypeptide reads, in one-letter code: MAVTGVSSAFGRLFKQDKTHKRVIGTGTKLTVTRQILEHLEGGNVSKAVSVLFASPEPVSYWLYERLFRSCSSKALVVQARKVQSHLVTFSPLPPIFLLNRAIEAYGKCGCVDDARELFEEMPERDGGSWNAVITACAQNGVSDEVFRMFRRMNRDGVRATETSFAGVLKSCGLILDLRLLRQLHCAVVKYGYSGNVDLETSIVDVYGKCRVMSDARRVFDEIVNPSDVSWNVIVRRYLEMGFNDEAVVMFFKMLELNVRPLNHTVSSVMLACSRSLALEVGKVIHAIAVKLSVVADTVVSTSVFDMYVKCDRLESARRVFDQTRSKDLKSWTSAMSGYAMSGLTREARELFDLMPERNIVSWNAMLGGYVHAHEWDEALDFLTLMRQEIENIDNVTLVWILNVCSGISDVQMGKQAHGFIYRHGYDTNVIVANALLDMYGKCGTLQSANIWFRQMSELRDEVSWNALLTGVARVGRSEQALSFFEGMQVEAKPSKYTLATLLAGCANIPALNLGKAIHGFLIRDGYKIDVVIRGAMVDMYSKCRCFDYAIEVFKEAATRDLILWNSIIRGCCRNGRSKEVFELFMLLENEGVKPDHVTFLGILQACIREGHVELGFQYFSSMSTKYHISPQVEHYDCMIELYCKYGCLHQLEEFLLLMPFDPPMQMLTRINDACQRYRWSKLGAWAAKRLMNDHYLQPP.

PPR repeat units lie at residues 95-125 (PIFLLNRAIEAYGKCGCVDDARELFEEMPER), 126-160 (DGGSWNAVITACAQNGVSDEVFRMFRRMNRDGVRA), 161-195 (TETSFAGVLKSCGLILDLRLLRQLHCAVVKYGYSG), 196-226 (NVDLETSIVDVYGKCRVMSDARRVFDEIVNP), 227-261 (SDVSWNVIVRRYLEMGFNDEAVVMFFKMLELNVRP), 262-296 (LNHTVSSVMLACSRSLALEVGKVIHAIAVKLSVVA), 297-327 (DTVVSTSVFDMYVKCDRLESARRVFDQTRSK), 328-362 (DLKSWTSAMSGYAMSGLTREARELFDLMPERNIVS), 363-389 (WNAMLGGYVHAHEWDEALDFLTLMRQE), 394-428 (DNVTLVWILNVCSGISDVQMGKQAHGFIYRHGYDT), 429-459 (NVIVANALLDMYGKCGTLQSANIWFRQMSEL), 461-495 (DEVSWNALLTGVARVGRSEQALSFFEGMQVEAKPS), 497-529 (YTLATLLAGCANIPALNLGKAIHGFLIRDGYKI), 530-560 (DVVIRGAMVDMYSKCRCFDYAIEVFKEAATR), 561-595 (DLILWNSIIRGCCRNGRSKEVFELFMLLENEGVKP), 596-626 (DHVTFLGILQACIREGHVELGFQYFSSMSTK), and 632-662 (QVEHYDCMIELYCKYGCLHQLEEFLLLMPFD).

Belongs to the PPR family. PCMP-A subfamily.

This chain is Pentatricopeptide repeat-containing protein At3g26540 (PCMP-A5), found in Arabidopsis thaliana (Mouse-ear cress).